Reading from the N-terminus, the 200-residue chain is UPF0637 protein LCABL_14170 (200 aa).

The protein belongs to the UPF0637 family.

In Lacticaseibacillus casei (strain BL23) (Lactobacillus casei), this protein is UPF0637 protein LCABL_14170.